Here is a 1078-residue protein sequence, read N- to C-terminus: Extracellular calcium-sensing receptor (1078 aa).

The N-terminal stretch at 1 to 19 (MAFYSCCWVLLALTWHTSA) is a signal peptide. The Extracellular segment spans residues 20–610 (YGPDQRAQKK…KEIEFLSWTE (591 aa)). The segment at 22–188 (PDQRAQKKGD…QFKSFLRTIP (167 aa)) is ligand-binding 1 (LB1). Cys60 and Cys101 form a disulfide bridge. Residue 66 to 70 (RGFRW) coordinates phosphate. Ca(2+)-binding residues include Ile81, Ser84, Leu87, and Leu88. Asn90 carries N-linked (GlcNAc...) asparagine glycosylation. Position 100 (Thr100) interacts with Ca(2+). Asn130 carries N-linked (GlcNAc...) asparagine glycosylation. A Ca(2+)-binding site is contributed by Thr145. Residues Ser147, Ala168, and Ser170 each coordinate L-tryptophan. Ca(2+)-binding residues include Ser170, Pro188, Asp190, Glu231, and Asp234. The ligand-binding 2 (LB2) stretch occupies residues 189-324 (NDEHQATAMA…GGTIGFALKA (136 aa)). 7 disulfide bridges follow: Cys236–Cys561, Cys358–Cys395, Cys437–Cys449, Cys542–Cys562, Cys546–Cys565, Cys568–Cys582, and Cys585–Cys598. Spermine-binding residues include Asp238 and Ser240. Asn261 and Asn287 each carry an N-linked (GlcNAc...) asparagine glycan. A Ca(2+)-binding site is contributed by Glu297. An L-tryptophan-binding site is contributed by Glu297. N-linked (GlcNAc...) asparagine glycosylation is found at Asn386 and Asn400. 415 to 417 (RIS) serves as a coordination point for phosphate. Asn446, Asn468, and Asn488 each carry an N-linked (GlcNAc...) asparagine glycan. Tyr489 is a binding site for Ca(2+). The N-linked (GlcNAc...) asparagine glycan is linked to Asn541. The interval 542-612 (CSRDCLAGTR…IEFLSWTEPF (71 aa)) is cysteine-rich (CR). Gly557 serves as a coordination point for Ca(2+). N-linked (GlcNAc...) asparagine glycosylation is present at Asn594. The chain crosses the membrane as a helical span at residues 611–636 (PFGIALTLFAVLGIFLTAFVLGVFIK). Topologically, residues 637-648 (FRNTPIVKATNR) are cytoplasmic. The intracellular loop 1 (ICL1) stretch occupies residues 637–648 (FRNTPIVKATNR). Residues 649–668 (ELSYLLLFSLLCCFSSSLFF) form a helical membrane-spanning segment. Residues 669-674 (IGEPQD) lie on the Extracellular side of the membrane. Residues 675–698 (WTCRLRQPAFGISFVLCISCILVK) traverse the membrane as a helical segment. Residues 699 to 722 (TNRVLLVFEAKIPTSFHRKWWGLN) lie on the Cytoplasmic side of the membrane. Residues 699–722 (TNRVLLVFEAKIPTSFHRKWWGLN) are intracellular loop 2 (ICL2). The helical transmembrane segment at 723 to 745 (LQFLLVFLCTFMQIVICVIWLYT) threads the bilayer. The Extracellular segment spans residues 746–769 (APPSSYRNQELEDEIIFITCHEGS). A helical membrane pass occupies residues 770–789 (LMALGFLIGYTCLLAAICFF). Residues 790 to 805 (FAFKSRKLPENFNEAK) lie on the Cytoplasmic side of the membrane. Residues 790–805 (FAFKSRKLPENFNEAK) form an intracellular loop 3 (ICL3) region. The helical transmembrane segment at 806–828 (FITFSMLIFFIVWISFIPAYAST) threads the bilayer. The Extracellular segment spans residues 829–832 (YGKF). Residues 833–854 (VSAVEVIAILAASFGLLACIFF) form a helical membrane-spanning segment. At 855-1078 (NKIYIILFKP…STVTENVVNS (224 aa)) the chain is on the cytoplasmic side. A C-terminus region spans residues 855 to 1078 (NKIYIILFKP…STVTENVVNS (224 aa)). The interval 880–900 (AFKVAARATLRRSNVSRKRSS) is interaction with RNF19A. Phosphothreonine; by PKC is present on Thr888. The arginine-rich retention motif stretch occupies residues 890–898 (RRSNVSRKR). At Ser892 the chain carries Phosphoserine; by PKC. 3 disordered regions span residues 892 to 963 (SNVS…PRCK), 986 to 1006 (AMAH…SSDT), and 1030 to 1055 (TGLQ…PALV). Phosphoserine; by PKA is present on Ser899. The span at 900-918 (SSLGGSTGSTPSSSISSKS) shows a compositional bias: low complexity. Residue Ser920 is modified to Phosphoserine. The segment covering 932-960 (QQQPLALTQQEQQQQPLTLPQQQRSQQQP) has biased composition (low complexity). Over residues 993–1006 (THQNSLEAQKSSDT) the composition is skewed to polar residues. Position 1061 is a phosphoserine (Ser1061).

This sequence belongs to the G-protein coupled receptor 3 family. In terms of assembly, homodimer; disulfide-linked. Interacts with VCP. Interacts with ARRB1. In terms of processing, phosphorylation at Thr-888 by PKC impairs coupling with G(q)/G(11) G-proteins, while it does not affect G(i)/G(o)-coupling. Phosphorylation at Ser-892 by PKC and Ser-899 by PKA promote plasma membrane localization. Ubiquitinated by RNF19A; which induces proteasomal degradation. Post-translationally, N-glycosylated. As to expression, expressed in the temporal lobe, frontal lobe, parietal lobe, hippocampus, and cerebellum. Also found in kidney, lung, liver, heart, skeletal muscle, placenta.

The protein resides in the cell membrane. Its activity is regulated as follows. In resting state, adopts an open conformation, anion-binding promoting the inactive configuration. Upon aromatic amino acid-binding, the groove in the extracellular venus flytrap module is closed, thereby inducing the formation of a novel homodimer interface between subunits. Calcium ions stabilize the active state by enhancing homodimer interactions between membrane-proximal domains to fully activate the receptor. Upon activation, the homodimer adopts an asymmetric configuration of the 7-transmembrane region that primes one protomer for G-protein coupling. G-protein binding expands the transmembrane dimer interface; the restriction imposed by the receptor dimer, in combination with intracellular loop 2 (ICL2), enables G-protein activation by facilitating conformational transition of G-protein alpha. Coupling to different classes of G-proteins results in distinct CASR-G-protein interfaces. Activated by glucose, which acts as a positive allosteric modulator. Activated by positive allosteric modulator drugs cinacalcet, evocalcet and etelcalcetide, which are clinically used for the treatment of hyperparathyroidism and familial hypocalciuric hypercalcemia. Inhibited by NPS-2143, a negative allosteric modulator tested for the treatment of hypocalcemia. Activated by velcalcetide (AMG 416), a D-amino acid-containing peptide agonist that is being evaluated for the treatment of secondary hyperparathyroidism in chronic kidney disease patients receiving hemodialysis. Velcalcetide agonist acts by forming a disulfide bond with Cys-482. Functionally, G-protein-coupled receptor that senses changes in the extracellular concentration of calcium ions and plays a key role in maintaining calcium homeostasis. Senses fluctuations in the circulating calcium concentration: activated by elevated circulating calcium, leading to decreased parathyroid hormone (PTH) secretion in parathyroid glands. In kidneys, acts as a key regulator of renal tubular calcium resorption. Ligand binding causes a conformation change that triggers signaling via guanine nucleotide-binding proteins (G-proteins) and modulates the activity of downstream effectors. CASR is coupled with different G(q)/G(11), G(i)/G(o)- or G(s)-classes of G-proteins depending on the context. In the parathyroid and kidney, CASR signals through G(q)/G(11) and G(i)/G(o) G-proteins: G(q)/G(11) coupling activates phospholipase C-beta, releasing diacylglycerol (DAG) and inositol 1,4,5-trisphosphate (IP3) second messengers, while G(i)/G(o) coupling mediates inhibition of adenylate cyclase activity. The G-protein-coupled receptor activity is activated by a co-agonist mechanism: aromatic amino acids, such as Trp or Phe, act concertedly with divalent cations, such as calcium or magnesium, to achieve full receptor activation. Acts as an activator of the NLRP3 inflammasome via G(i)/G(o)-mediated signaling: down-regulation of cyclic AMP (cAMP) relieving NLRP3 inhibition by cAMP. Acts as a regulator of proton-sensing receptor GPR68 in a seesaw manner: CASR-mediated signaling inhibits GPR68 signaling in response to extracellular calcium, while GPR68 inhibits CASR in presence of extracellular protons. This is Extracellular calcium-sensing receptor from Homo sapiens (Human).